A 393-amino-acid chain; its full sequence is Venom metalloproteinase BumaMPs1 (393 aa).

The signal sequence occupies residues 1 to 15 (MFVHLLVLLFAAVEA). N-linked (GlcNAc...) asparagine glycosylation is present at Asn158. One can recognise a Peptidase M12B domain in the interval 167–377 (KCVKIEYVFV…RVEELITRRK (211 aa)). A Zn(2+)-binding site is contributed by His323. Residue Glu324 is part of the active site. The Zn(2+) site is built by His327 and His333. The segment at 378-393 (INHCIVETCDGKRKRN) is disintegrin-like domain.

It belongs to the venom metalloproteinase (M12B) family. Zn(2+) serves as cofactor. In terms of processing, contains several disulfide bonds. In terms of tissue distribution, expressed by the venom gland.

It is found in the secreted. In terms of biological role, metalloprotease. This Olivierus martensii (Manchurian scorpion) protein is Venom metalloproteinase BumaMPs1.